Reading from the N-terminus, the 227-residue chain is LexA repressor (227 aa).

The H-T-H motif DNA-binding region spans 26–46 (FDEMKEALDLASKSGIHRLIT). Active-site for autocatalytic cleavage activity residues include Ser147 and Lys185.

Belongs to the peptidase S24 family. Homodimer.

The enzyme catalyses Hydrolysis of Ala-|-Gly bond in repressor LexA.. Represses a number of genes involved in the response to DNA damage (SOS response), including recA and lexA. In the presence of single-stranded DNA, RecA interacts with LexA causing an autocatalytic cleavage which disrupts the DNA-binding part of LexA, leading to derepression of the SOS regulon and eventually DNA repair. In Hyphomonas neptunium (strain ATCC 15444), this protein is LexA repressor.